A 518-amino-acid polypeptide reads, in one-letter code: Pre-glycoprotein polyprotein GP complex (518 aa).

A lipid anchor (N-myristoyl glycine; by host) is attached at Gly-2. Over 2–17 the chain is Extracellular; it reads GQVIGFFQSLPNIINE. The chain crosses the membrane as a helical span at residues 18 to 33; the sequence is ALNIALICVALIAILK. Residues 34–58 lie on the Cytoplasmic side of the membrane; the sequence is GIVNIWKSGLIQLFIFLILAGRSCS. Cys-57 is a binding site for Zn(2+). Topologically, residues 59–456 are extracellular; the sequence is HTFQIGRNHE…QGSTPLSLVD (398 aa). 4 disulfide bridges follow: Cys-87–Cys-258, Cys-303–Cys-316, Cys-325–Cys-334, and Cys-388–Cys-409. N-linked (GlcNAc...) asparagine; by host glycosylation is found at Asn-90, Asn-112, Asn-127, Asn-180, and Asn-251. N-linked (GlcNAc...) asparagine; by host glycosylation is found at Asn-389, Asn-397, Asn-414, and Asn-419. A helical transmembrane segment spans residues 457–477; the sequence is LCFWSTLFYVTTLFAHLVGFP. Residues 478–518 are Cytoplasmic-facing; it reads THRHILDGPCPKPHRLTKKGICSCGHFGIPGKPVRWVKRSR. The Zn(2+) site is built by His-479, His-481, Cys-487, His-491, Cys-499, and Cys-501.

It belongs to the arenaviridae GPC protein family. In terms of assembly, interacts with glycoprotein G2. Part of the GP complex (GP-C) together with glycoprotein G1 and glycoprotein G2. The GP-complex interacts with protein Z, which interacts with ribonucleocapsid; these interactions may induce virion budding. As to quaternary structure, homotrimer; disulfide-linked. In pre-fusion state, G1 homotrimers bind G2 homotrimers via ionic interactions. Part of the GP complex (GP-C) together with glycoprotein G2 and the stable signal peptide. The GP-complex interacts with protein Z, which interacts with ribonucleocapsid; these interactions may induce virion budding. Homotrimer. Interacts with the stable signal peptide. In pre-fusion state, G2 homotrimers bind G1 homotrimers via ionic interactions. Part of the GP complex (GP-C) together with glycoprotein G1 and the stable signal peptide. Acidification in the endosome triggers rearrangements, which ultimately leads to a 6 helix bundle formed by the two heptad repeat domains (HR1 and HR2) in post-fusion state. The GP-complex interacts with protein Z, which interacts with ribonucleocapsid; these interactions may induce virion budding. Post-translationally, specific enzymatic cleavages in vivo yield mature proteins. GP-C polyprotein is cleaved in the endoplasmic reticulum by the host protease MBTPS1. Only cleaved glycoprotein is incorporated into virions. The SSP remains stably associated with the GP complex following cleavage by signal peptidase and plays crucial roles in the trafficking of GP through the secretory pathway. In terms of processing, myristoylation is necessary for GP2-mediated fusion activity.

Its subcellular location is the virion membrane. It is found in the host endoplasmic reticulum membrane. The protein resides in the host Golgi apparatus membrane. The protein localises to the host cell membrane. In terms of biological role, functions as a cleaved signal peptide that is retained as the third component of the GP complex (GP-C). Helps to stabilize the spike complex in its native conformation. The SSP is required for efficient glycoprotein expression, post-translational maturation cleavage of G1 and G2, glycoprotein transport to the cell surface plasma membrane, formation of infectious virus particles, and acid pH-dependent glycoprotein-mediated cell fusion. Functionally, forms the virion spikes together with glycoprotein G2. The glycoprotein spike trimers are connected to the underlying matrix. Mediates virus attachment to host receptor alpha-dystroglycan DAG1. This attachment induces virion internalization predominantly through clathrin- and caveolin-independent endocytosis. Forms the virion spikes together with glycoprotein G1. The glycoprotein spike trimers are connected to the underlying matrix. Class I viral fusion protein that directs fusion of viral and host endosomal membranes, leading to delivery of the nucleocapsid into the cytoplasm. Membrane fusion is mediated by irreversible conformational changes induced by acidification. This chain is Pre-glycoprotein polyprotein GP complex, found in Bolomys (OLVV).